A 320-amino-acid chain; its full sequence is RNA-binding protein Musashi homolog 1 (320 aa).

Residues 1-14 (MTTTVSTGATAVAT) are compositionally biased toward low complexity. The interval 1 to 48 (MTTTVSTGATAVATLRETSPPVDGHEEARLNADSDDGSHGSQDPGKMF) is disordered. Threonine 18 is modified (phosphothreonine). Phosphoserine occurs at positions 19 and 34. A compositionally biased stretch (basic and acidic residues) spans 23-38 (DGHEEARLNADSDDGS). 2 consecutive RRM domains span residues 45–124 (GKMF…FPKR) and 134–211 (KKVF…KAQP). Required for binding to target mRNAs stretches follow at residues 88–93 (FGFITF) and 177–182 (FGFVTF).

It belongs to the Musashi family. Expressed in the gut and in AVA, AFD, RMD, RMED, RMEV, RMER and RMEL neurons (at protein level). In the tail expressed in neurons and all the ray sensilla. Expressed in male specific C1-C4 neurons.

Its subcellular location is the cytoplasm. It is found in the perikaryon. Functionally, RNA binding protein that regulates the expression of target mRNAs at the translation level. Binds RNA containing the 5'-[GA]U(1-3)AGU-3' motif located in the 3' UTR of the target mRNA. Binds to the mRNA of three Arp2/3 complex components arx-1, arx-2 and arx-3 and negatively regulates their translation during association learning. Plays a role in time-dependent memory loss and the retention of conditioned behavior over time, probably through negative regulation of the Arp2/3 actin cytoskeleton branching complex and regulation of synapse size. Required for two aspects of male mating behavior: turning around the hermaphrodite head or tail and vulva location. This is RNA-binding protein Musashi homolog 1 from Caenorhabditis elegans.